A 282-amino-acid chain; its full sequence is 4-diphosphocytidyl-2-C-methyl-D-erythritol kinase (282 aa).

Residue K12 is part of the active site. 95 to 105 (PMGGGIGGGSS) lines the ATP pocket. The active site involves D137.

Belongs to the GHMP kinase family. IspE subfamily.

The catalysed reaction is 4-CDP-2-C-methyl-D-erythritol + ATP = 4-CDP-2-C-methyl-D-erythritol 2-phosphate + ADP + H(+). It functions in the pathway isoprenoid biosynthesis; isopentenyl diphosphate biosynthesis via DXP pathway; isopentenyl diphosphate from 1-deoxy-D-xylulose 5-phosphate: step 3/6. Functionally, catalyzes the phosphorylation of the position 2 hydroxy group of 4-diphosphocytidyl-2C-methyl-D-erythritol. The sequence is that of 4-diphosphocytidyl-2-C-methyl-D-erythritol kinase from Pseudomonas aeruginosa (strain ATCC 15692 / DSM 22644 / CIP 104116 / JCM 14847 / LMG 12228 / 1C / PRS 101 / PAO1).